The sequence spans 450 residues: Neuronal acetylcholine receptor subunit alpha-10 (450 aa).

The first 24 residues, 1-24 (MGLRSHHLSLGLLLLFLLPAECLG), serve as a signal peptide directing secretion. At 25–237 (AEGRLALKLF…FTLLLRRRAA (213 aa)) the chain is on the extracellular side. Residues Asn40 and Asn56 are each glycosylated (N-linked (GlcNAc...) asparagine). 2 disulfides stabilise this stretch: Cys154-Cys168 and Cys218-Cys219. Helical transmembrane passes span 238 to 258 (AYVC…PLAF), 268 to 288 (VSLG…LAES), and 302 to 322 (YMAT…IMNL). At 323 to 428 (HYCGPSVRPV…WKRLARVMDR (106 aa)) the chain is on the cytoplasmic side. The disordered stretch occupies residues 355–380 (EPCGQSRPPELSPSPQSPEGGAGPPA). A helical membrane pass occupies residues 429–449 (FFLAIFFSMALVMSLLVLVQA).

It belongs to the ligand-gated ion channel (TC 1.A.9) family. Acetylcholine receptor (TC 1.A.9.1) subfamily. Alpha-10/CHRNA10 sub-subfamily. As to quaternary structure, forms homo- or heterooligomeric channels in conjunction with CHRNA10. The native outer hair cell receptor may be composed of CHRNA9:CHRNA10 heterooligomers. Found in the stoichiometric form (CHRNA9)2:(CHRNA10)3. Expressed in inner-ear tissue, tonsil, immortalized B-cells, cultured T-cells and peripheral blood lymphocytes.

The protein resides in the synaptic cell membrane. It localises to the cell membrane. It catalyses the reaction Ca(2+)(in) = Ca(2+)(out). It carries out the reaction K(+)(in) = K(+)(out). The catalysed reaction is Na(+)(in) = Na(+)(out). The enzyme catalyses Mg(2+)(in) = Mg(2+)(out). Its activity is regulated as follows. Activated by a myriad of ligands such as acetylcholine. AChR activity is inhibited by the antagonists alpha-conotoxins RgIA and GeXXA, small disulfide-constrained peptides from cone snails. Component of neuronal acetylcholine receptors (nAChRs) that function as pentameric, ligand-gated cation channels with high calcium permeability. nAChRs are excitatory neurotrasnmitter receptors formed by a collection of nAChR subunits. Each nAchR subunit confers differential attributes to channel properties, including activation, deactivation and desensitization kinetics, pH sensitivity, cation permeability, and binding to allosteric modulators. Forms heteropentamers with CHRNA9. Expressed in the inner ear, in sympathetic neurons and in other non-neuronal cells, such as skin keratinocytes and lymphocytes. nAChR formed by CHRNA9:CHRNA10 is involved in modulation of auditory stimuli. The channel is permeable to a range of divalent cations including calcium, the influx of which may activate a potassium current which hyperpolarizes the cell membrane. In the ear, mediates synaptic transmission between efferent olivocochlear fibers and hair cells of the cochlea, this may lead to a reduction in basilar membrane motion, altering the activity of auditory nerve fibers and reducing the range of dynamic hearing. This may protect against acoustic trauma. May also regulate keratinocyte adhesion. This Homo sapiens (Human) protein is Neuronal acetylcholine receptor subunit alpha-10.